The following is a 674-amino-acid chain: Protein asunder (674 aa).

Residues 516–538 (HKAKDQYRLLYRELEQLIQLNAS) adopt a coiled-coil conformation. Positions 601 to 607 (LKASKRR) match the Nuclear localization signal (NLS) motif.

Belongs to the Integrator subunit 13 family. Belongs to the multiprotein complex Integrator, at least composed of IntS1, IntS2, IntS3, IntS4, omd/IntS5, IntS6, defl/IntS7, IntS8, IntS9, IntS10, IntS11, IntS12, asun/IntS13, IntS14 and IntS15. The core complex associates with protein phosphatase 2A subunits mts/PP2A and Pp2A-29B, to form the Integrator-PP2A (INTAC) complex. Phosphorylated.

Its subcellular location is the nucleus. The protein localises to the cytoplasm. It is found in the perinuclear region. Component of the integrator complex, a multiprotein complex that terminates RNA polymerase II (Pol II) transcription in the promoter-proximal region of genes. The integrator complex provides a quality checkpoint during transcription elongation by driving premature transcription termination of transcripts that are unfavorably configured for transcriptional elongation: the complex terminates transcription by (1) catalyzing dephosphorylation of the C-terminal domain (CTD) of Pol II subunit Polr2A/Rbp1 and Spt5, and (2) degrading the exiting nascent RNA transcript via endonuclease activity. The integrator complex is also involved in the 3'-end processing of the U7 snRNA, and also the spliceosomal snRNAs U1, U2, U4 and U5. The polypeptide is Protein asunder (asun) (Drosophila persimilis (Fruit fly)).